We begin with the raw amino-acid sequence, 344 residues long: Dihydroorotase (344 aa).

Zn(2+) contacts are provided by H13 and H15. Substrate is bound by residues 15–17 and N41; that span reads HVR. 3 residues coordinate Zn(2+): K99, H136, and H174. Residue K99 is modified to N6-carboxylysine. H136 lines the substrate pocket. L219 contributes to the substrate binding site. D247 is a Zn(2+) binding site. The active site involves D247. H251 and A263 together coordinate substrate.

This sequence belongs to the metallo-dependent hydrolases superfamily. DHOase family. Class II DHOase subfamily. In terms of assembly, homodimer. Zn(2+) is required as a cofactor.

The enzyme catalyses (S)-dihydroorotate + H2O = N-carbamoyl-L-aspartate + H(+). Its pathway is pyrimidine metabolism; UMP biosynthesis via de novo pathway; (S)-dihydroorotate from bicarbonate: step 3/3. Functionally, catalyzes the reversible cyclization of carbamoyl aspartate to dihydroorotate. This chain is Dihydroorotase, found in Aromatoleum aromaticum (strain DSM 19018 / LMG 30748 / EbN1) (Azoarcus sp. (strain EbN1)).